A 356-amino-acid chain; its full sequence is Xylose/arabinose import permease protein XylH (356 aa).

The next 10 helical transmembrane spans lie at 14–34 (LFLV…AYFS), 41–61 (IFQY…LMLC), 70–90 (ALAN…YQAI), 96–116 (IVVS…MNGL), 126–146 (LITT…YSGG), 161–181 (VSIL…LILL), 211–231 (VKII…IIQG), 242–262 (FTAD…TSLV), 266–286 (GSLV…NGFN), and 287–307 (ILGI…VVVM).

It belongs to the binding-protein-dependent transport system permease family. As to quaternary structure, the complex is composed of two ATP-binding proteins (XylG), two transmembrane proteins (XylH) and a solute-binding protein (XylF).

Its subcellular location is the cell membrane. Part of the ABC transporter complex XylFGH involved in the uptake of xylose and arabinose. Responsible for the translocation of the substrate across the membrane. The polypeptide is Xylose/arabinose import permease protein XylH (Sulfolobus acidocaldarius (strain ATCC 33909 / DSM 639 / JCM 8929 / NBRC 15157 / NCIMB 11770)).